Consider the following 685-residue polypeptide: Linoleate 9/13-lipoxygenase (685 aa).

The signal sequence occupies residues methionine 1 to alanine 19. Residues alanine 122–isoleucine 685 enclose the Lipoxygenase domain. Histidine 377, histidine 382, histidine 555, asparagine 559, and isoleucine 685 together coordinate Fe cation.

The protein belongs to the lipoxygenase family. As to quaternary structure, monomer. Fe cation is required as a cofactor.

The protein localises to the periplasm. The enzyme catalyses (9Z,12Z)-octadecadienoate + O2 = (9S)-hydroperoxy-(10E,12Z)-octadecadienoate. The catalysed reaction is (9Z)-octadecenoate + O2 = (8E,10S)-10-hydroperoxy-octadeca-8-enoate. It carries out the reaction (9Z,12Z)-octadecadienoate + O2 = (8E,10S,12Z)-10-hydroperoxyoctadeca-8,12-dienoate. It catalyses the reaction (9Z,12Z,15Z)-octadecatrienoate + O2 = (8E,10S,12Z,15Z)-10-hydroperoxyoctadeca-8,12,15-trienoate. The enzyme catalyses (9Z,12Z)-octadecadienoate + O2 = (13S)-hydroperoxy-(9Z,11E)-octadecadienoate. The catalysed reaction is (9Z,12Z,15Z)-octadecatrienoate + O2 = (13S)-hydroperoxy-(9Z,11E,15Z)-octadecatrienoate. Its activity is regulated as follows. Inhibited by Ba(2+), Zn(2+) and Fe(3+). In presence of oxygen, converts linoleate into (9S)-hydroperoxy-10,12-octadecenoate (9HPOD), which spontaneously decomposes to the corresponding 9-hydroxy-10,12-octadecenoate (9HOD), and into 13-hydroperoxy-9,11-octadecenoate (13HPOD) which spontaneously decomposes to the corresponding 13-hydroxy-9,11-octadecenoate (13HOD). Also active on linolenate. To a lesser extent, is also able to convert oleate into (10S)-hydroperoxy-8E-octadecenoate, which spontaneously decomposes to the corresponding 10-hydroxy-8E-octadecenoate. Is almost not active on arachidonate. The polypeptide is Linoleate 9/13-lipoxygenase (lox) (Pseudomonas aeruginosa).